Here is a 511-residue protein sequence, read N- to C-terminus: Adenosine deaminase 2 (511 aa).

Positions 1-29 (MLVDGPSEWPALRFLLLAVAMSFFGSALS) are cleaved as a signal peptide. Residues 30–100 (IDETRAHLLL…HLIERSQVFN (71 aa)) are dimerization. Residues His-112 and His-114 each contribute to the Zn(2+) site. Asp-115 contacts substrate. Asn-127 carries N-linked (GlcNAc...) asparagine glycosylation. Residues 127–185 (NVTYRPHCHICFTPKGIMQFRFAHPTPRTSEKCSKWILLEDYRKRVQNVTEFDDSLLRN) form a PRB domain region. A disulfide bridge links Cys-137 with Cys-159. N-linked (GlcNAc...) asparagine glycans are attached at residues Asn-174 and Asn-185. Substrate-binding positions include 204–211 (WSKFETIF), His-293, and Gly-326. Residue His-356 coordinates Zn(2+). The active-site Proton donor is Glu-359. Asn-378 is a glycosylation site (N-linked (GlcNAc...) asparagine). His-384 (proton acceptor) is an active-site residue. Asp-441 contributes to the Zn(2+) binding site. Asp-442 is a substrate binding site.

This sequence belongs to the metallo-dependent hydrolases superfamily. Adenosine and AMP deaminases family. ADGF subfamily. As to quaternary structure, homodimer. Interacts with adenosine receptors. Binds heparin. The cofactor is Zn(2+).

It localises to the secreted. It catalyses the reaction adenosine + H2O + H(+) = inosine + NH4(+). Its function is as follows. Adenosine deaminase that may contribute to the degradation of extracellular adenosine, a signaling molecule that controls a variety of cellular responses. Requires elevated adenosine levels for optimal enzyme activity. Binds to cell surfaces via proteoglycans and may play a role in the regulation of cell proliferation and differentiation, independently of its enzyme activity. This chain is Adenosine deaminase 2, found in Pongo abelii (Sumatran orangutan).